The following is a 440-amino-acid chain: Xaa-Pro dipeptidase (440 aa).

Mn(2+)-binding residues include aspartate 244, aspartate 255, histidine 335, glutamate 380, and glutamate 419.

Belongs to the peptidase M24B family. Bacterial-type prolidase subfamily. Mn(2+) serves as cofactor.

The catalysed reaction is Xaa-L-Pro dipeptide + H2O = an L-alpha-amino acid + L-proline. Splits dipeptides with a prolyl residue in the C-terminal position. The sequence is that of Xaa-Pro dipeptidase from Shewanella piezotolerans (strain WP3 / JCM 13877).